Reading from the N-terminus, the 355-residue chain is Capsid protein VP1/VP2 (355 aa).

Basic and acidic residues predominate over residues 1–21 (MADSTTMEHDGRGTKRKREAD). The segment at 1-41 (MADSTTMEHDGRGTKRKREADGGSGQGVGKGNSNAVKEGYG) is disordered.

It belongs to the parvoviridae capsid protein family.

Its subcellular location is the virion. Its function is as follows. Capsid protein self-assembles to form an icosahedral capsid with a T=1 symmetry, about 22 nm in diameter, and consisting of 60 copies of size variants of the capsid proteins, which differ in the N-terminushe capsid encapsulates the genomic ssDNA. Capsid proteins are responsible for the attachment to host cell receptors. This attachment induces virion internalization predominantly through clathrin-dependent endocytosis. The chain is Capsid protein VP1/VP2 (VP) from Aedes albopictus densovirus (isolate Boublik/1994) (AalDNV).